Reading from the N-terminus, the 266-residue chain is Thymidylate synthase (266 aa).

Arg-24 lines the dUMP pocket. His-54 provides a ligand contact to (6R)-5,10-methylene-5,6,7,8-tetrahydrofolate. Residue Arg-129 to Arg-130 participates in dUMP binding. Cys-149 serves as the catalytic Nucleophile. DUMP contacts are provided by residues Arg-169–Asp-172, Asn-180, and His-210–Tyr-212. Asp-172 is a binding site for (6R)-5,10-methylene-5,6,7,8-tetrahydrofolate. Ala-265 provides a ligand contact to (6R)-5,10-methylene-5,6,7,8-tetrahydrofolate.

Belongs to the thymidylate synthase family. Bacterial-type ThyA subfamily. As to quaternary structure, homodimer.

Its subcellular location is the cytoplasm. The enzyme catalyses dUMP + (6R)-5,10-methylene-5,6,7,8-tetrahydrofolate = 7,8-dihydrofolate + dTMP. It participates in pyrimidine metabolism; dTTP biosynthesis. Catalyzes the reductive methylation of 2'-deoxyuridine-5'-monophosphate (dUMP) to 2'-deoxythymidine-5'-monophosphate (dTMP) while utilizing 5,10-methylenetetrahydrofolate (mTHF) as the methyl donor and reductant in the reaction, yielding dihydrofolate (DHF) as a by-product. This enzymatic reaction provides an intracellular de novo source of dTMP, an essential precursor for DNA biosynthesis. The sequence is that of Thymidylate synthase from Corynebacterium glutamicum (strain R).